We begin with the raw amino-acid sequence, 457 residues long: Argininosuccinate lyase (457 aa).

It belongs to the lyase 1 family. Argininosuccinate lyase subfamily.

It localises to the cytoplasm. It carries out the reaction 2-(N(omega)-L-arginino)succinate = fumarate + L-arginine. It functions in the pathway amino-acid biosynthesis; L-arginine biosynthesis; L-arginine from L-ornithine and carbamoyl phosphate: step 3/3. This is Argininosuccinate lyase from Escherichia coli O9:H4 (strain HS).